The primary structure comprises 301 residues: GTPase Era (301 aa).

Residues 7-175 enclose the Era-type G domain; sequence YCGFIAIVGR…AAIVRKHLPE (169 aa). Positions 15-22 are G1; that stretch reads GRPNVGKS. Residue 15–22 coordinates GTP; sequence GRPNVGKS. The interval 41–45 is G2; sequence QTTRH. The tract at residues 62–65 is G3; sequence DTPG. Residues 62 to 66 and 124 to 127 contribute to the GTP site; these read DTPGL and NKVD. Residues 124–127 are G4; sequence NKVD. The segment at 154 to 156 is G5; the sequence is ISA. The region spanning 206–283 is the KH type-2 domain; the sequence is LGAELPYSVT…HLELWVKVKS (78 aa).

This sequence belongs to the TRAFAC class TrmE-Era-EngA-EngB-Septin-like GTPase superfamily. Era GTPase family. In terms of assembly, monomer.

The protein localises to the cytoplasm. It localises to the cell inner membrane. An essential GTPase that binds both GDP and GTP, with rapid nucleotide exchange. Plays a role in 16S rRNA processing and 30S ribosomal subunit biogenesis and possibly also in cell cycle regulation and energy metabolism. The chain is GTPase Era from Escherichia coli O157:H7.